The primary structure comprises 119 residues: Ribonuclease P protein component (119 aa).

Belongs to the RnpA family. As to quaternary structure, consists of a catalytic RNA component (M1 or rnpB) and a protein subunit.

It carries out the reaction Endonucleolytic cleavage of RNA, removing 5'-extranucleotides from tRNA precursor.. In terms of biological role, RNaseP catalyzes the removal of the 5'-leader sequence from pre-tRNA to produce the mature 5'-terminus. It can also cleave other RNA substrates such as 4.5S RNA. The protein component plays an auxiliary but essential role in vivo by binding to the 5'-leader sequence and broadening the substrate specificity of the ribozyme. The chain is Ribonuclease P protein component from Salmonella schwarzengrund (strain CVM19633).